The following is a 205-amino-acid chain: Large ribosomal subunit protein uL4 (205 aa).

The segment at 47 to 70 (TRAQKSRAEVSGGGKKPFRQKGTG) is disordered.

Belongs to the universal ribosomal protein uL4 family. As to quaternary structure, part of the 50S ribosomal subunit.

Its function is as follows. One of the primary rRNA binding proteins, this protein initially binds near the 5'-end of the 23S rRNA. It is important during the early stages of 50S assembly. It makes multiple contacts with different domains of the 23S rRNA in the assembled 50S subunit and ribosome. Functionally, forms part of the polypeptide exit tunnel. The protein is Large ribosomal subunit protein uL4 of Acinetobacter baylyi (strain ATCC 33305 / BD413 / ADP1).